A 278-amino-acid chain; its full sequence is uncharacterized protein (278 aa).

Positions 1 to 11 (MMIHIHQDKKM) are enriched in basic and acidic residues. 2 disordered regions span residues 1–107 (MMIH…RYFK) and 206–278 (KVSA…KASR). Low complexity predominate over residues 62 to 94 (KQSGGKNAKSGSKSAKSGSKSAKSGSKTSKTQS). Residues 97–107 (KGDESRDRYFK) show a composition bias toward basic and acidic residues. The span at 249 to 260 (SAKNAKSTGNKK) shows a compositional bias: polar residues. Residues 264 to 278 (KSAGAKKAPAAKASR) are compositionally biased toward low complexity.

This is an uncharacterized protein from Acanthamoeba polyphaga mimivirus (APMV).